A 138-amino-acid chain; its full sequence is Flagellar assembly factor FliW (138 aa).

Belongs to the FliW family. Interacts with translational regulator CsrA and flagellin(s).

It is found in the cytoplasm. In terms of biological role, acts as an anti-CsrA protein, binds CsrA and prevents it from repressing translation of its target genes, one of which is flagellin. Binds to flagellin and participates in the assembly of the flagellum. The polypeptide is Flagellar assembly factor FliW (Symbiobacterium thermophilum (strain DSM 24528 / JCM 14929 / IAM 14863 / T)).